The following is a 222-amino-acid chain: Peptide methionine sulfoxide reductase MsrA (222 aa).

Cys-60 is a catalytic residue.

This sequence belongs to the MsrA Met sulfoxide reductase family.

It catalyses the reaction L-methionyl-[protein] + [thioredoxin]-disulfide + H2O = L-methionyl-(S)-S-oxide-[protein] + [thioredoxin]-dithiol. The enzyme catalyses [thioredoxin]-disulfide + L-methionine + H2O = L-methionine (S)-S-oxide + [thioredoxin]-dithiol. Has an important function as a repair enzyme for proteins that have been inactivated by oxidation. Catalyzes the reversible oxidation-reduction of methionine sulfoxide in proteins to methionine. The sequence is that of Peptide methionine sulfoxide reductase MsrA from Pseudomonas putida (strain GB-1).